A 142-amino-acid chain; its full sequence is Large ribosomal subunit protein uL13 (142 aa).

It belongs to the universal ribosomal protein uL13 family. In terms of assembly, part of the 50S ribosomal subunit.

This protein is one of the early assembly proteins of the 50S ribosomal subunit, although it is not seen to bind rRNA by itself. It is important during the early stages of 50S assembly. This chain is Large ribosomal subunit protein uL13, found in Trichlorobacter lovleyi (strain ATCC BAA-1151 / DSM 17278 / SZ) (Geobacter lovleyi).